A 171-amino-acid polypeptide reads, in one-letter code: Secreted thaumatin-like protein calA (171 aa).

The signal sequence occupies residues 1–18 (MLFNKIISLAATLATASA). 2 N-linked (GlcNAc...) asparagine glycosylation sites follow: Asn37 and Asn141. Disulfide bonds link Cys130/Cys157 and Cys135/Cys142.

Belongs to the thaumatin family.

Its subcellular location is the secreted. The protein resides in the extracellular space. The protein localises to the extracellular matrix. It is found in the cell wall. Its function is as follows. Secreted thaumatin-like protein that, with cetA, plays an essential role in early conidial germination with a possible role in cell wall remodeling. This is Secreted thaumatin-like protein calA from Emericella nidulans (strain FGSC A4 / ATCC 38163 / CBS 112.46 / NRRL 194 / M139) (Aspergillus nidulans).